The primary structure comprises 150 residues: Macrodomain Ter protein (150 aa).

It belongs to the MatP family. In terms of assembly, homodimer.

Its subcellular location is the cytoplasm. Its function is as follows. Required for spatial organization of the terminus region of the chromosome (Ter macrodomain) during the cell cycle. Prevents early segregation of duplicated Ter macrodomains during cell division. Binds specifically to matS, which is a 13 bp signature motif repeated within the Ter macrodomain. This chain is Macrodomain Ter protein, found in Shigella boydii serotype 18 (strain CDC 3083-94 / BS512).